Here is a 164-residue protein sequence, read N- to C-terminus: MGFLEINWTSAAMLMLFVLMVYFLNKFLYTPFIEMAEKRRKKVEEDLKSAEQLKEEAEKMRSEAERFLSEARQRADEIVESARKEAEAIVEEAREKAKKEAQNIVESAKTQIEVEYKKALEQVQERAAELSVILATKLLQKVFQDERARREYLVKILKEEIEKS.

The helical transmembrane segment at 10–32 (SAAMLMLFVLMVYFLNKFLYTPF) threads the bilayer.

This sequence belongs to the ATPase B chain family. F-type ATPases have 2 components, F(1) - the catalytic core - and F(0) - the membrane proton channel. F(1) has five subunits: alpha(3), beta(3), gamma(1), delta(1), epsilon(1). F(0) has three main subunits: a(1), b(2) and c(10-14). The alpha and beta chains form an alternating ring which encloses part of the gamma chain. F(1) is attached to F(0) by a central stalk formed by the gamma and epsilon chains, while a peripheral stalk is formed by the delta and b chains.

It is found in the cell inner membrane. Its function is as follows. F(1)F(0) ATP synthase produces ATP from ADP in the presence of a proton or sodium gradient. F-type ATPases consist of two structural domains, F(1) containing the extramembraneous catalytic core and F(0) containing the membrane proton channel, linked together by a central stalk and a peripheral stalk. During catalysis, ATP synthesis in the catalytic domain of F(1) is coupled via a rotary mechanism of the central stalk subunits to proton translocation. Functionally, component of the F(0) channel, it forms part of the peripheral stalk, linking F(1) to F(0). In Thermotoga maritima (strain ATCC 43589 / DSM 3109 / JCM 10099 / NBRC 100826 / MSB8), this protein is ATP synthase subunit b.